The sequence spans 438 residues: 3-phosphoshikimate 1-carboxyvinyltransferase (438 aa).

Residues lysine 26, serine 27, and arginine 31 each contribute to the 3-phosphoshikimate site. Lysine 26 contributes to the phosphoenolpyruvate binding site. 2 residues coordinate phosphoenolpyruvate: glycine 99 and arginine 127. Serine 170, serine 171, glutamine 172, serine 199, glutamate 314, and histidine 343 together coordinate 3-phosphoshikimate. Glutamine 172 provides a ligand contact to phosphoenolpyruvate. Catalysis depends on glutamate 314, which acts as the Proton acceptor. Phosphoenolpyruvate is bound by residues arginine 347, arginine 388, and lysine 413.

The protein belongs to the EPSP synthase family. Monomer.

It localises to the cytoplasm. The enzyme catalyses 3-phosphoshikimate + phosphoenolpyruvate = 5-O-(1-carboxyvinyl)-3-phosphoshikimate + phosphate. It functions in the pathway metabolic intermediate biosynthesis; chorismate biosynthesis; chorismate from D-erythrose 4-phosphate and phosphoenolpyruvate: step 6/7. Functionally, catalyzes the transfer of the enolpyruvyl moiety of phosphoenolpyruvate (PEP) to the 5-hydroxyl of shikimate-3-phosphate (S3P) to produce enolpyruvyl shikimate-3-phosphate and inorganic phosphate. The sequence is that of 3-phosphoshikimate 1-carboxyvinyltransferase from Mycobacterium sp. (strain MCS).